Here is a 173-residue protein sequence, read N- to C-terminus: Protein SUGARY ENHANCER 1 (173 aa).

The segment at Met1 to Gly31 is disordered.

It belongs to the fantastic four family.

Its function is as follows. Involved in starch metabolism in endosperm. Acts as a modifier of SUGARY1 (SU1), an isoamylase starch-debranching enzyme involved in amylopectin biosynthesis in endosperm. The protein is Protein SUGARY ENHANCER 1 of Zea mays (Maize).